Reading from the N-terminus, the 217-residue chain is uncharacterized protein (217 aa).

Residues 2-216 (LCVKNVSLRL…AQWSENYNKL (215 aa)) enclose the ABC transporter domain. 34–41 (GPSGCGKS) is a binding site for ATP.

The protein belongs to the ABC transporter superfamily.

In terms of biological role, probably part of a binding-protein-dependent transport system YnjCD. Probably responsible for energy coupling to the transport system. This is an uncharacterized protein from Escherichia coli (strain K12).